A 278-amino-acid chain; its full sequence is Small ribosomal subunit protein uS3 (278 aa).

Residues 38–106 enclose the KH type-2 domain; sequence IRKLLSKGME…QVQLNILEVK (69 aa). Residues 213–278 are disordered; it reads RQAQAAARAG…APAPAENQEG (66 aa). Over residues 214 to 223 the composition is skewed to low complexity; that stretch reads QAQAAARAGV. Over residues 232 to 253 the composition is skewed to basic and acidic residues; it reads RGGERPSRGSRGDRPTRADRGG. Residues 259 to 278 are compositionally biased toward low complexity; the sequence is EATGAATEQAAPAPAENQEG.

The protein belongs to the universal ribosomal protein uS3 family. Part of the 30S ribosomal subunit. Forms a tight complex with proteins S10 and S14.

Its function is as follows. Binds the lower part of the 30S subunit head. Binds mRNA in the 70S ribosome, positioning it for translation. This chain is Small ribosomal subunit protein uS3, found in Nocardioides sp. (strain ATCC BAA-499 / JS614).